Reading from the N-terminus, the 296-residue chain is NAD kinase (296 aa).

The active-site Proton acceptor is Asp-72. NAD(+)-binding positions include 72-73, 146-147, Arg-157, Lys-174, Asp-176, 187-192, and Gln-247; these read DG, ND, and TAYALS.

Belongs to the NAD kinase family. It depends on a divalent metal cation as a cofactor.

The protein resides in the cytoplasm. It catalyses the reaction NAD(+) + ATP = ADP + NADP(+) + H(+). In terms of biological role, involved in the regulation of the intracellular balance of NAD and NADP, and is a key enzyme in the biosynthesis of NADP. Catalyzes specifically the phosphorylation on 2'-hydroxyl of the adenosine moiety of NAD to yield NADP. This is NAD kinase from Pseudomonas fluorescens (strain SBW25).